Here is a 198-residue protein sequence, read N- to C-terminus: Holliday junction branch migration complex subunit RuvA (198 aa).

The interval 1–61 is domain I; that stretch reads MYEYFEGIIQ…DNDQTLYGFE (61 aa). Residues 62 to 140 form a domain II region; the sequence is GAADKRTFNQ…TDGQPAAAAI (79 aa). Residues 141–145 are flexible linker; sequence APVAS. The domain III stretch occupies residues 146–198; sequence DVDSELADALAALVALGYPQRTVDGLTDTLKAFSAKTTDAYLREGLRLLSGKA.

Belongs to the RuvA family. In terms of assembly, homotetramer. Forms an RuvA(8)-RuvB(12)-Holliday junction (HJ) complex. HJ DNA is sandwiched between 2 RuvA tetramers; dsDNA enters through RuvA and exits via RuvB. An RuvB hexamer assembles on each DNA strand where it exits the tetramer. Each RuvB hexamer is contacted by two RuvA subunits (via domain III) on 2 adjacent RuvB subunits; this complex drives branch migration. In the full resolvosome a probable DNA-RuvA(4)-RuvB(12)-RuvC(2) complex forms which resolves the HJ.

It localises to the cytoplasm. Functionally, the RuvA-RuvB-RuvC complex processes Holliday junction (HJ) DNA during genetic recombination and DNA repair, while the RuvA-RuvB complex plays an important role in the rescue of blocked DNA replication forks via replication fork reversal (RFR). RuvA specifically binds to HJ cruciform DNA, conferring on it an open structure. The RuvB hexamer acts as an ATP-dependent pump, pulling dsDNA into and through the RuvAB complex. HJ branch migration allows RuvC to scan DNA until it finds its consensus sequence, where it cleaves and resolves the cruciform DNA. This chain is Holliday junction branch migration complex subunit RuvA, found in Lacticaseibacillus casei (strain BL23) (Lactobacillus casei).